A 453-amino-acid polypeptide reads, in one-letter code: Allantoinase (453 aa).

His-59, His-61, Lys-146, His-186, His-242, and Asp-315 together coordinate Zn(2+). Lys-146 is subject to N6-carboxylysine.

Belongs to the metallo-dependent hydrolases superfamily. Allantoinase family. In terms of assembly, homotetramer. Requires Zn(2+) as cofactor. Post-translationally, carboxylation allows a single lysine to coordinate two zinc ions.

The catalysed reaction is (S)-allantoin + H2O = allantoate + H(+). It functions in the pathway nitrogen metabolism; (S)-allantoin degradation; allantoate from (S)-allantoin: step 1/1. Functionally, catalyzes the conversion of allantoin (5-ureidohydantoin) to allantoic acid by hydrolytic cleavage of the five-member hydantoin ring. The chain is Allantoinase from Escherichia coli (strain SMS-3-5 / SECEC).